The following is a 1428-amino-acid chain: DNA-directed RNA polymerase subunit beta' (1428 aa).

Zn(2+) contacts are provided by Cys66, Cys68, Cys81, and Cys84. Mg(2+) contacts are provided by Asp472, Asp474, and Asp476. Residues Cys816, Cys890, Cys897, and Cys900 each coordinate Zn(2+).

The protein belongs to the RNA polymerase beta' chain family. As to quaternary structure, the RNAP catalytic core consists of 2 alpha, 1 beta, 1 beta' and 1 omega subunit. When a sigma factor is associated with the core the holoenzyme is formed, which can initiate transcription. Mg(2+) is required as a cofactor. Zn(2+) serves as cofactor.

It carries out the reaction RNA(n) + a ribonucleoside 5'-triphosphate = RNA(n+1) + diphosphate. DNA-dependent RNA polymerase catalyzes the transcription of DNA into RNA using the four ribonucleoside triphosphates as substrates. In Phocaeicola vulgatus (strain ATCC 8482 / DSM 1447 / JCM 5826 / CCUG 4940 / NBRC 14291 / NCTC 11154) (Bacteroides vulgatus), this protein is DNA-directed RNA polymerase subunit beta'.